The chain runs to 357 residues: tRNA pseudouridine synthase B (357 aa).

Residue Asp42 is the Nucleophile of the active site.

Belongs to the pseudouridine synthase TruB family. Type 1 subfamily.

It carries out the reaction uridine(55) in tRNA = pseudouridine(55) in tRNA. In terms of biological role, responsible for synthesis of pseudouridine from uracil-55 in the psi GC loop of transfer RNAs. This chain is tRNA pseudouridine synthase B, found in Treponema denticola (strain ATCC 35405 / DSM 14222 / CIP 103919 / JCM 8153 / KCTC 15104).